The primary structure comprises 318 residues: Probable major capsid protein gp17 (318 aa).

It belongs to the L5likevirus major capsid protein gp17 family.

Its subcellular location is the virion. This Mycobacterium (Mycobacteriophage D29) protein is Probable major capsid protein gp17 (17).